A 105-amino-acid chain; its full sequence is UPF0235 protein RPR_04990 (105 aa).

Belongs to the UPF0235 family.

This Rickettsia peacockii (strain Rustic) protein is UPF0235 protein RPR_04990.